Reading from the N-terminus, the 328-residue chain is GMP reductase (328 aa).

Cys-176 (thioimidate intermediate) is an active-site residue. 205–228 (IIADGGIRTHGDVAKSIRFGATMV) contributes to the NADP(+) binding site.

The protein belongs to the IMPDH/GMPR family. GuaC type 2 subfamily.

The catalysed reaction is IMP + NH4(+) + NADP(+) = GMP + NADPH + 2 H(+). In terms of biological role, catalyzes the irreversible NADPH-dependent deamination of GMP to IMP. It functions in the conversion of nucleobase, nucleoside and nucleotide derivatives of G to A nucleotides, and in maintaining the intracellular balance of A and G nucleotides. In Bacillus cereus (strain ATCC 14579 / DSM 31 / CCUG 7414 / JCM 2152 / NBRC 15305 / NCIMB 9373 / NCTC 2599 / NRRL B-3711), this protein is GMP reductase.